Consider the following 261-residue polypeptide: 5'-nucleotidase SurE (261 aa).

4 residues coordinate a divalent metal cation: Asp-12, Asp-13, Ser-43, and Asn-99.

This sequence belongs to the SurE nucleotidase family. A divalent metal cation is required as a cofactor.

It localises to the cytoplasm. The enzyme catalyses a ribonucleoside 5'-phosphate + H2O = a ribonucleoside + phosphate. Nucleotidase that shows phosphatase activity on nucleoside 5'-monophosphates. This Polynucleobacter asymbioticus (strain DSM 18221 / CIP 109841 / QLW-P1DMWA-1) (Polynucleobacter necessarius subsp. asymbioticus) protein is 5'-nucleotidase SurE.